The primary structure comprises 150 residues: Early 4 ORF6/7 control protein (150 aa).

Positions 1-31 (MTTSGVPFGMTLRPTRSRLSRRTPYSRDRLP) are disordered. The Nuclear localization signal signature appears at 1–58 (MTTSGVPFGMTLRPTRSRLSRRTPYSRDRLPPFETETRATILEDHPLLPECNTLTMHN).

It belongs to the adenoviridae E4-orf6/7 family. In terms of assembly, interacts with host E2F proteins.

It localises to the host nucleus. Its function is as follows. Modulates viral and host transcriptional activity to promote viral genome replication. Stimulates viral E2a promoter activity by binding and inducing dimerization of host E2F. During viral infection E1A protein binds to cellular retinablastoma (RB) family members and dissociates these repressors from a complex with E2F proteins. Free E2F is then bound to E4orf6/7 which leads to transactivation of viral E2 promoter, and cellular promoters such as E2F-1 promoter. Activation of cellular E2F targets promote cell cycle S phase and thereby possibly favorises viral DNA replication process. This Human adenovirus C serotype 2 (HAdV-2) protein is Early 4 ORF6/7 control protein.